Here is a 354-residue protein sequence, read N- to C-terminus: Ubiquitin-conjugating enzyme E2 Z (354 aa).

The segment at 1-21 (MAESPTEEAATAGAGAAGPGA) is disordered. Positions 99 to 253 (QCLLRIKRDI…IRHETIRVAV (155 aa)) constitute a UBC core domain. Catalysis depends on C188, which acts as the Glycyl thioester intermediate. The disordered stretch occupies residues 332 to 354 (NAEMDSDSSSSGTETDLHGSLRV). Position 337 is a phosphoserine (S337).

Belongs to the ubiquitin-conjugating enzyme family. In terms of tissue distribution, widely expressed. Highly in placenta, pancreas, spleen and testis.

It localises to the cytoplasm. The protein localises to the nucleus. The catalysed reaction is S-ubiquitinyl-[E1 ubiquitin-activating enzyme]-L-cysteine + [E2 ubiquitin-conjugating enzyme]-L-cysteine = [E1 ubiquitin-activating enzyme]-L-cysteine + S-ubiquitinyl-[E2 ubiquitin-conjugating enzyme]-L-cysteine.. It functions in the pathway protein modification; protein ubiquitination. In terms of biological role, catalyzes the covalent attachment of ubiquitin to other proteins. Specific substrate for UBA6, not charged with ubiquitin by UBE1. May be involved in apoptosis regulation. This Homo sapiens (Human) protein is Ubiquitin-conjugating enzyme E2 Z (UBE2Z).